The primary structure comprises 77 residues: Pollen allergen Amb p 5b (77 aa).

A signal peptide spans 1-22; that stretch reads MNNEKNVSFEFIGSTNEVDEIK. Disulfide bonds link C26/C61, C33/C48, and C40/C54.

The protein localises to the secreted. In Ambrosia psilostachya (Western ragweed), this protein is Pollen allergen Amb p 5b.